The chain runs to 338 residues: Protein FosB (338 aa).

Disordered stretches follow at residues 1–54 (MFQA…PGSF) and 80–179 (AQSQ…RREL). The segment covering 13–31 (SRCSSSPSAESQYLSSVDS) has biased composition (polar residues). Ser27 is modified (phosphoserine). Over residues 123-137 (PSTSTSTSGPVSARP) the composition is skewed to low complexity. In terms of domain architecture, bZIP spans 155–218 (EEKRRVRRER…ERLEFVLVAH (64 aa)). Residues 157-182 (KRRVRRERNKLAAAKCRNRRRELTDR) form a basic motif region. Positions 183 to 211 (LQAETDQLEEEKAELESEIAELQKEKERL) are leucine-zipper. Disordered regions lie at residues 222 to 276 (CKIP…PPNL) and 315 to 338 (AGSQRTSGSEQPSDPLNSPSLLAL). Pro residues predominate over residues 256–265 (LPPPPPPPLP). Over residues 266–276 (FQSSRDAPPNL) the composition is skewed to polar residues.

The protein belongs to the bZIP family. Fos subfamily. In terms of assembly, heterodimer; binds to DNA as heterodimer. Component of an AP-1 transcription factor complex; composed of FOS-JUN heterodimers. As part of the AP-1 transcription factor complex, forms heterodimers with JUN, JUNB or JUND, thereby binding to the AP-1 consensus sequence and stimulating transcription. Post-translationally, phosphorylated; phosphorylation is induced by chronic electroconvulsive seizure (ECS) treatment. As to expression, expressed in brain. Expressed in pyramidal cells in CA1 and CA3, in the dentate gyrus and the nucleus accumbens (at protein level).

It localises to the nucleus. Its function is as follows. Heterodimerizes with proteins of the JUN family to form an AP-1 transcription factor complex, thereby enhancing their DNA binding activity to an AP-1 consensus sequence 5'-TGA[GC]TCA-3' and enhancing their transcriptional activity. Exhibits transactivation activity in vitro. As part of the AP-1 complex, facilitates enhancer selection together with cell-type-specific transcription factors by collaboratively binding to nucleosomal enhancers and recruiting the SWI/SNF (BAF) chromatin remodeling complex to establish accessible chromatin. Together with JUN, plays a role in activation-induced cell death of T cells by binding to the AP-1 promoter site of FASLG/CD95L, and inducing its transcription in response to activation of the TCR/CD3 signaling pathway. Involved in the display of nurturing behavior towards newborns. May play a role in neurogenesis in the hippocampus and in learning and memory-related tasks by regulating the expression of various genes involved in neurogenesis, depression and epilepsy. Implicated in behavioral responses related to morphine reward and spatial memory. This chain is Protein FosB, found in Rattus norvegicus (Rat).